The chain runs to 573 residues: MDPQGIVKAFPKRKKSHADLSSKALAKIPKREVGEARGWLSSLRAHIMPAGIGRARAELFEKQIIHHGGQVCSAQAPGVTHIVVDEDMDYERALRLLRLPQLPPGAQLVKSTWLSLCLQEGRLTDTEGFSLPMPKRSLDEPQPSKSGQDASAPGTQRDLPRTTLSLSPPHTRAVSPPPTAEKPSRTQAQLSSEDETSDGEGPQVSSADLQALITGHYPTPPEEDGGPDPAPEALDKWVCAQPSSQKATNYNLHITEKLEVLAKAYSVQGDKWRALGYAKAINALKSFHKPVSSYQEACSIPGIGKRMAEKVMEILESGHLRKLDHISDSVPVLELFSNIWGAGTKTAQMWYHQGFRNLEDLQSLGSLTAQQAIGLKHYDDFLDRMPREEAAEIEQTVRISAQAFNPGLLCVACGSYRRGKMTCGDVDVLITHPDGRSHRGIFSCLLDSLRQQGFLTDDLVSQEENGQQQKYLGVCRLPGPGKRHRRLDIIVVPYCEFACALLYFTGSAHFNRSMRALAKTKGMSLSEHALSAAVVRNSQGVKVGPGQVLPTPTEKDVFKHLGLPYREPAERDW.

The 97-residue stretch at 35 to 131 folds into the BRCT domain; the sequence is EARGWLSSLR…RLTDTEGFSL (97 aa). Disordered stretches follow at residues 126–204 and 214–233; these read TEGF…GPQV and TGHY…APEA. The DNA-binding stretch occupies residues 263–277; sequence KAYSVQGDKWRALGY. Catalysis depends on lysine 310, which acts as the Schiff-base intermediate with DNA. The interval 343 to 346 is DNA-binding; sequence GTKT. DCTP is bound by residues arginine 384, 415-418, and 424-427; these read SYRR and GDVD. The segment at 418–427 is involved in primer binding; it reads RGKMTCGDVD. Mn(2+)-binding residues include aspartate 425, aspartate 427, and aspartate 488. The DNA-binding stretch occupies residues 464–503; the sequence is ENGQQQKYLGVCRLPGPGKRHRRLDIIVVPYCEFACALLY. Asparagine 511 contacts dCTP.

Belongs to the DNA polymerase type-X family. As to quaternary structure, interacts with PCNA. Interacts with PAXX; promoting POLL recruitment to double-strand breaks (DSBs) and stimulation of the end-filling activity of POLL. Interacts with XRCC4; promoting POLL recruitment to double-strand breaks (DSBs) and stimulation of the end-filling activity of POLL. Interacts with NHEJ1/XLF; promoting POLL recruitment to double-strand breaks (DSBs) and stimulation of the end-filling activity of POLL. It depends on Mn(2+) as a cofactor.

It is found in the nucleus. It carries out the reaction DNA(n) + a 2'-deoxyribonucleoside 5'-triphosphate = DNA(n+1) + diphosphate. In terms of biological role, DNA polymerase that functions in several pathways of DNA repair. Involved in base excision repair (BER) responsible for repair of lesions that give rise to abasic (AP) sites in DNA. Also contributes to DNA double-strand break repair by non-homologous end joining and homologous recombination. Has both template-dependent and template-independent (terminal transferase) DNA polymerase activities. Also has a 5'-deoxyribose-5-phosphate lyase (dRP lyase) activity. This is DNA polymerase lambda from Mus musculus (Mouse).